The sequence spans 162 residues: Lymphocyte antigen 86 (162 aa).

Positions 1-20 (MKGFTATLFLWTLIFPSCSG) are cleaved as a signal peptide. Disulfide bonds link Cys33/Cys58, Cys45/Cys154, and Cys102/Cys112. Asn96 is a glycosylation site (N-linked (GlcNAc...) asparagine). The N-linked (GlcNAc...) asparagine glycan is linked to Asn156.

In terms of assembly, M-shaped tetramer of two CD180-LY86 heterodimers. Highly expressed in B-cells, monocytes and tonsil.

It localises to the secreted. The protein localises to the extracellular space. Functionally, may cooperate with CD180 and TLR4 to mediate the innate immune response to bacterial lipopolysaccharide (LPS) and cytokine production. Important for efficient CD180 cell surface expression. The polypeptide is Lymphocyte antigen 86 (LY86) (Homo sapiens (Human)).